The following is a 253-amino-acid chain: Claudin domain-containing protein 1 (253 aa).

The helical transmembrane segment at 5–25 (FATAFVIACVLSLISTIYMAA) threads the bilayer. Residues N42 and N72 are each glycosylated (N-linked (GlcNAc...) asparagine). A run of 3 helical transmembrane segments spans residues 141 to 161 (FLLPFVSLGLMCFGALIGLCA), 175 to 195 (ILHLLAGLCTLGSVSCYVAGI), and 216 to 236 (FCLACVSAPLQFMASALFIWA).

The protein belongs to the PMP-22/EMP/MP20 family. In terms of tissue distribution, widely distributed in the adult CNS with highest expression in the corpus callosum, caudate nucleus, cerebral cortex, medulla, putamen, spinal cord, substantia nigra and subthalamic nucleus. Weak expression was detected in the adult heart.

The protein resides in the cell junction. The protein localises to the tight junction. Its subcellular location is the cell membrane. Plays a role in negatively regulating the permeability of cells to small molecules. The chain is Claudin domain-containing protein 1 (CLDND1) from Homo sapiens (Human).